An 807-amino-acid polypeptide reads, in one-letter code: Nucleolar complex protein 3 homolog (807 aa).

2 disordered regions span residues 27-93 (KLKN…DMMD) and 167-191 (EKPV…EVIE). Over residues 40-51 (KKYRKEQRKLRQ) the composition is skewed to basic residues. The span at 52–78 (AVKDAVSKKPIPLEDPKSKRPVKRMER) shows a compositional bias: basic and acidic residues. Composition is skewed to acidic residues over residues 79–93 (EEDE…DMMD) and 174–190 (QQEE…EEVI). K332 participates in a covalent cross-link: Glycyl lysine isopeptide (Lys-Gly) (interchain with G-Cter in SUMO2). The stretch at 449-489 (FKEKRKTLSRMQRKWKKAEEKLERELREAEASESTEKKLKL) forms a coiled coil.

Belongs to the CBF/MAK21 family.

It localises to the nucleus. Its subcellular location is the nucleolus. The protein localises to the nucleus speckle. In terms of biological role, may be required for adipogenesis. In Mus musculus (Mouse), this protein is Nucleolar complex protein 3 homolog (Noc3l).